The following is a 320-amino-acid chain: Probable cell division protein WhiA (320 aa).

A DNA-binding region (H-T-H motif) is located at residues 276-310 (TLKELGEMVESGKVSKSGVNHRLRKIDELAEKLRA).

This sequence belongs to the WhiA family.

Its function is as follows. Involved in cell division and chromosome segregation. In Halalkalibacterium halodurans (strain ATCC BAA-125 / DSM 18197 / FERM 7344 / JCM 9153 / C-125) (Bacillus halodurans), this protein is Probable cell division protein WhiA.